Consider the following 67-residue polypeptide: UPF0181 protein KPK_1966 (67 aa).

Positions glutamate 48 to aspartate 67 are disordered. Acidic residues predominate over residues glutamate 55 to aspartate 67.

Belongs to the UPF0181 family.

The chain is UPF0181 protein KPK_1966 from Klebsiella pneumoniae (strain 342).